Here is a 99-residue protein sequence, read N- to C-terminus: Microcin E492 (99 aa).

Positions 1-15 (MREISQKDLNLAFGA) are cleaved as a signal peptide. The interval 80–99 (SWNGSGSGYNSATSSSGSGS) is disordered. Over residues 87-99 (GYNSATSSSGSGS) the composition is skewed to low complexity. Position 99 is a serine microcin E492 siderophore ester (Ser-99).

It belongs to the class IIa microcin family. As to quaternary structure, multimer. Possibly forms a homodimer or a homotrimer. The C-terminal Ser is modified by attachment to a siderophore similar to enterobactin, which can bind one atom of iron. The modification consists of an ester linkage of the serine carboxyl to O6 of a glucose which is linked by a C-glycosidic bond to the 5'-benzoyl of a linear triester of N-(2,3-dihydroxybenzoyl)serine. Presence of the siderophore ester increases the antibacterial activity of the protein.

In terms of biological role, channel-forming bacteriocin. Forms cation-selective channels. Active on enterobacteria, with highest activity against E.coli. Not active on other Gram-negative bacteria, Gram-positive bacteria or fungi. The unmodified protein is active against E.coli and S.enteritidis. When the siderophore ester is present at Ser-99, antibacterial activity against these species is increased and activity is also detected against E.cloacae and K.pneumoniae. Neutralized by its immunity protein MceB. This is Microcin E492 from Klebsiella pneumoniae.